A 471-amino-acid chain; its full sequence is Venom prothrombin activator vestarin-D2 (471 aa).

The N-terminal stretch at 1–20 is a signal peptide; sequence MAPQLLLCLILTFLWSLPEA. A propeptide spanning residues 21–40 is cleaved from the precursor; sequence ESNVFLKSNVANRFLQRTKR. A Gla domain is found at 41 to 86; the sequence is ANSIFEEIRPGNIERECVEEKCSKEEAREVFQDNEKTEAFWTVYVD. 4-carboxyglutamate occurs at positions 46, 47, 54, 56, 59, 60, 65, 66, 69, and 75. Cysteine 57 and cysteine 62 are joined by a disulfide. In terms of domain architecture, EGF-like 1; calcium-binding spans 86–122; that stretch reads DGDQCLSNPCHYRGTCKDGIGSYTCTCLPGYEGKNCE. 10 disulfide bridges follow: cysteine 90–cysteine 101, cysteine 95–cysteine 110, cysteine 112–cysteine 121, cysteine 129–cysteine 140, cysteine 136–cysteine 149, cysteine 151–cysteine 164, cysteine 172–cysteine 333, cysteine 233–cysteine 238, cysteine 381–cysteine 395, and cysteine 406–cysteine 434. Serine 92 is a glycosylation site (O-linked (Hex...) serine). In terms of domain architecture, EGF-like 2 spans 129–164; that stretch reads CRLFNGNCWHFCKTVQNDTQCSCAEGYRLGVDGFSC. Positions 182-226 are cleaved as a propeptide — activation peptide; sequence REASLPDFHFSDDYDAIDENNLVETVQSQSATLLKKSDNPSPDIR. Positions 227–458 constitute a Peptidase S1 domain; it reads IVSGLDCKLG…FIPWIKTIMR (232 aa). Catalysis depends on histidine 268, which acts as the Charge relay system. An N-linked (GlcNAc...) asparagine glycan is attached at asparagine 271. Aspartate 313 serves as the catalytic Charge relay system. The active-site Charge relay system is serine 410.

Belongs to the peptidase S1 family. Snake venom subfamily. Heterodimer of a light chain and a heavy chain; disulfide-linked. In terms of processing, the vitamin K-dependent, enzymatic carboxylation of some glutamate residues allows the modified protein to bind calcium. In terms of tissue distribution, expressed by the venom gland.

It is found in the secreted. It carries out the reaction Selective cleavage of Arg-|-Thr and then Arg-|-Ile bonds in prothrombin to form thrombin.. Functionally, snake prothrombin activator that attacks the hemostatic system of prey. This protein is functionally similar to blood coagulation factor Xa. The chain is Venom prothrombin activator vestarin-D2 from Demansia vestigiata (Lesser black whip snake).